Consider the following 220-residue polypeptide: Ribose-5-phosphate isomerase A (220 aa).

Substrate is bound by residues 29 to 32, 82 to 85, and 95 to 98; these read TGST, DGCD, and KGGG. Glu104 serves as the catalytic Proton acceptor. Lys122 is a substrate binding site.

Belongs to the ribose 5-phosphate isomerase family. In terms of assembly, homodimer.

The enzyme catalyses aldehydo-D-ribose 5-phosphate = D-ribulose 5-phosphate. It functions in the pathway carbohydrate degradation; pentose phosphate pathway; D-ribose 5-phosphate from D-ribulose 5-phosphate (non-oxidative stage): step 1/1. Functionally, catalyzes the reversible conversion of ribose-5-phosphate to ribulose 5-phosphate. This chain is Ribose-5-phosphate isomerase A, found in Laribacter hongkongensis (strain HLHK9).